A 307-amino-acid chain; its full sequence is Acetaldehyde dehydrogenase 1 (307 aa).

The Acyl-thioester intermediate role is filled by C131. NAD(+) is bound by residues 162–170 and N273; that span reads SIGPGTRKN.

The protein belongs to the acetaldehyde dehydrogenase family.

The catalysed reaction is acetaldehyde + NAD(+) + CoA = acetyl-CoA + NADH + H(+). The sequence is that of Acetaldehyde dehydrogenase 1 (salG) from Metapseudomonas furukawaii (Pseudomonas furukawaii).